Here is a 39-residue protein sequence, read N- to C-terminus: Photosystem I reaction center subunit IX (39 aa).

Residues F4 to I24 form a helical membrane-spanning segment.

This sequence belongs to the PsaJ family.

The protein localises to the cellular thylakoid membrane. Its function is as follows. May help in the organization of the PsaE and PsaF subunits. The chain is Photosystem I reaction center subunit IX from Synechococcus sp. (strain CC9311).